The chain runs to 362 residues: Phospho-N-acetylmuramoyl-pentapeptide-transferase (362 aa).

Helical transmembrane passes span alanine 28–leucine 48, glycine 72–tryptophan 92, valine 100–leucine 120, valine 134–threonine 154, valine 170–serine 190, glycine 201–valine 221, leucine 241–proline 261, valine 265–alanine 285, isoleucine 290–valine 310, and threonine 339–leucine 359.

The protein belongs to the glycosyltransferase 4 family. MraY subfamily. The cofactor is Mg(2+).

The protein localises to the cell inner membrane. It catalyses the reaction UDP-N-acetyl-alpha-D-muramoyl-L-alanyl-gamma-D-glutamyl-meso-2,6-diaminopimeloyl-D-alanyl-D-alanine + di-trans,octa-cis-undecaprenyl phosphate = di-trans,octa-cis-undecaprenyl diphospho-N-acetyl-alpha-D-muramoyl-L-alanyl-D-glutamyl-meso-2,6-diaminopimeloyl-D-alanyl-D-alanine + UMP. It participates in cell wall biogenesis; peptidoglycan biosynthesis. In terms of biological role, catalyzes the initial step of the lipid cycle reactions in the biosynthesis of the cell wall peptidoglycan: transfers peptidoglycan precursor phospho-MurNAc-pentapeptide from UDP-MurNAc-pentapeptide onto the lipid carrier undecaprenyl phosphate, yielding undecaprenyl-pyrophosphoryl-MurNAc-pentapeptide, known as lipid I. In Granulibacter bethesdensis (strain ATCC BAA-1260 / CGDNIH1), this protein is Phospho-N-acetylmuramoyl-pentapeptide-transferase.